Reading from the N-terminus, the 546-residue chain is Chaperonin GroEL 2 (546 aa).

ATP contacts are provided by residues 30 to 33 (TLGP), Lys-51, 87 to 91 (DGTTT), Gly-415, and Asp-495.

It belongs to the chaperonin (HSP60) family. In terms of assembly, forms a cylinder of 14 subunits composed of two heptameric rings stacked back-to-back. Interacts with the co-chaperonin GroES.

Its subcellular location is the cytoplasm. It carries out the reaction ATP + H2O + a folded polypeptide = ADP + phosphate + an unfolded polypeptide.. In terms of biological role, together with its co-chaperonin GroES, plays an essential role in assisting protein folding. The GroEL-GroES system forms a nano-cage that allows encapsulation of the non-native substrate proteins and provides a physical environment optimized to promote and accelerate protein folding. The protein is Chaperonin GroEL 2 of Burkholderia cenocepacia (strain HI2424).